The primary structure comprises 325 residues: Probable 2-ketogluconate reductase (325 aa).

NAD(+) contacts are provided by residues 158–159 (RI), T211, 238–240 (ISR), and D264. Residue R240 is part of the active site. E269 is an active-site residue. The Proton donor role is filled by H288. 288 to 291 (HIGS) provides a ligand contact to NAD(+).

This sequence belongs to the D-isomer specific 2-hydroxyacid dehydrogenase family.

The catalysed reaction is D-gluconate + NADP(+) = 2-dehydro-D-gluconate + NADPH + H(+). The protein is Probable 2-ketogluconate reductase (yvcT) of Bacillus subtilis (strain 168).